A 546-amino-acid chain; its full sequence is CTP synthase (546 aa).

Positions 1–266 are amidoligase domain; the sequence is MTTRYIFVTG…DDLVVKRFGL (266 aa). CTP is bound at residue S14. S14 provides a ligand contact to UTP. ATP is bound by residues 15–20 and D72; that span reads SLGKGI. Positions 72 and 140 each coordinate Mg(2+). Residues 147 to 149, 187 to 192, and K223 contribute to the CTP site; these read DIE and KTKPTQ. UTP is bound by residues 187-192 and K223; that span reads KTKPTQ. 239-241 is an ATP binding site; sequence KDV. The Glutamine amidotransferase type-1 domain occupies 291–542; sequence VIGMVGKYIE…VAAASAHQKR (252 aa). G352 contributes to the L-glutamine binding site. Residue C379 is the Nucleophile; for glutamine hydrolysis of the active site. L-glutamine is bound by residues 380 to 383, E403, and R470; that span reads LGMQ. Residues H515 and E517 contribute to the active site.

The protein belongs to the CTP synthase family. Homotetramer.

The catalysed reaction is UTP + L-glutamine + ATP + H2O = CTP + L-glutamate + ADP + phosphate + 2 H(+). It catalyses the reaction L-glutamine + H2O = L-glutamate + NH4(+). The enzyme catalyses UTP + NH4(+) + ATP = CTP + ADP + phosphate + 2 H(+). It participates in pyrimidine metabolism; CTP biosynthesis via de novo pathway; CTP from UDP: step 2/2. With respect to regulation, allosterically activated by GTP, when glutamine is the substrate; GTP has no effect on the reaction when ammonia is the substrate. The allosteric effector GTP functions by stabilizing the protein conformation that binds the tetrahedral intermediate(s) formed during glutamine hydrolysis. Inhibited by the product CTP, via allosteric rather than competitive inhibition. Functionally, catalyzes the ATP-dependent amination of UTP to CTP with either L-glutamine or ammonia as the source of nitrogen. Regulates intracellular CTP levels through interactions with the four ribonucleotide triphosphates. This is CTP synthase from Shewanella sp. (strain MR-7).